The chain runs to 442 residues: Protein translocase subunit SecF (442 aa).

The interval 1–39 (MASKAKTGRDDEATSAVELTEATESAVARTDGDSTTDTA) is disordered. The next 6 helical transmembrane spans lie at 67–87 (WFGVSGAIVAVAIASIVFRGF), 187–207 (ITKKAVIALVVFLVLVALYIT), 218–238 (AITAMLFDLTVTAGVYSLVGF), 243–263 (ATVIGLLTILGFSLYDTVIVF), 301–321 (LIGVLPVLALMVVAVWLLGVG), and 331–351 (LIGIIIGTYSSIFFATPLLVT). Positions 366 to 442 (VLKRRNSGSP…PTGKRNAGRR (77 aa)) are disordered. Low complexity predominate over residues 402–432 (QASSQSAPRAAQGSSKPAPGARPVRPVGTRR). Residues 433–442 (PTGKRNAGRR) show a composition bias toward basic residues.

Belongs to the SecD/SecF family. SecF subfamily. As to quaternary structure, forms a complex with SecD. Part of the essential Sec protein translocation apparatus which comprises SecA, SecYEG and auxiliary proteins SecDF. Other proteins may also be involved.

The protein resides in the cell membrane. Part of the Sec protein translocase complex. Interacts with the SecYEG preprotein conducting channel. SecDF uses the proton motive force (PMF) to complete protein translocation after the ATP-dependent function of SecA. In Mycobacterium tuberculosis (strain ATCC 25618 / H37Rv), this protein is Protein translocase subunit SecF.